We begin with the raw amino-acid sequence, 114 residues long: Non-specific lipid-transfer protein 1 (114 aa).

Positions 1–23 (MEMVSKIACFVLLCMVVVAPHAE) are cleaved as a signal peptide. Disulfide bonds link C27/C73, C37/C50, C51/C96, and C71/C110.

The protein belongs to the plant LTP family.

Its function is as follows. Plant non-specific lipid-transfer proteins transfer phospholipids as well as galactolipids across membranes. May play a role in wax or cutin deposition in the cell walls of expanding epidermal cells and certain secretory tissues. This Solanum pennellii (Tomato) protein is Non-specific lipid-transfer protein 1 (LTP1).